The primary structure comprises 148 residues: Short form salivary protein D7S1 (148 aa).

The N-terminal stretch at 1–21 (MKQNVFFLIAYFSLVFCMCNA) is a signal peptide. Disulfide bonds link C28–C61, C41–C147, and C103–C119.

Belongs to the PBP/GOBP family. As to expression, female salivary gland.

It is found in the secreted. In contrast to the related D7 salivary proteins that can bind biogenic amines, does not bind serotonin. This is Short form salivary protein D7S1 from Aedes aegypti (Yellowfever mosquito).